The sequence spans 377 residues: Beta sliding clamp (377 aa).

It belongs to the beta sliding clamp family. Forms a ring-shaped head-to-tail homodimer around DNA which binds and tethers DNA polymerases and other proteins to the DNA. The DNA replisome complex has a single clamp-loading complex (3 tau and 1 each of delta, delta', psi and chi subunits) which binds 3 Pol III cores (1 core on the leading strand and 2 on the lagging strand) each with a beta sliding clamp dimer. Additional proteins in the replisome are other copies of gamma, psi and chi, Ssb, DNA helicase and RNA primase.

The protein resides in the cytoplasm. Confers DNA tethering and processivity to DNA polymerases and other proteins. Acts as a clamp, forming a ring around DNA (a reaction catalyzed by the clamp-loading complex) which diffuses in an ATP-independent manner freely and bidirectionally along dsDNA. Initially characterized for its ability to contact the catalytic subunit of DNA polymerase III (Pol III), a complex, multichain enzyme responsible for most of the replicative synthesis in bacteria; Pol III exhibits 3'-5' exonuclease proofreading activity. The beta chain is required for initiation of replication as well as for processivity of DNA replication. The protein is Beta sliding clamp (dnaN) of Staphylococcus epidermidis (strain ATCC 35984 / DSM 28319 / BCRC 17069 / CCUG 31568 / BM 3577 / RP62A).